The primary structure comprises 318 residues: Ornithine carbamoyltransferase (318 aa).

Carbamoyl phosphate contacts are provided by residues 63-66 (STRT), Gln-90, Arg-114, and 141-144 (HPCQ). Residues Asn-172, Asp-235, and 239–240 (SM) each bind L-ornithine. Carbamoyl phosphate-binding positions include 275-276 (CL) and Arg-303.

Belongs to the aspartate/ornithine carbamoyltransferase superfamily. OTCase family.

It is found in the cytoplasm. The catalysed reaction is carbamoyl phosphate + L-ornithine = L-citrulline + phosphate + H(+). Its pathway is amino-acid biosynthesis; L-arginine biosynthesis; L-arginine from L-ornithine and carbamoyl phosphate: step 1/3. In terms of biological role, reversibly catalyzes the transfer of the carbamoyl group from carbamoyl phosphate (CP) to the N(epsilon) atom of ornithine (ORN) to produce L-citrulline. In Prochlorococcus marinus (strain MIT 9313), this protein is Ornithine carbamoyltransferase.